A 403-amino-acid chain; its full sequence is Putative queuine tRNA-ribosyltransferase (403 aa).

Catalysis depends on Asp91, which acts as the Proton acceptor. Residues 91–95 (DSGGF), Asp177, Gln218, and Gly245 each bind substrate. Residues 275 to 281 (GIGAIED) are RNA binding. Catalysis depends on Asp294, which acts as the Nucleophile. The tract at residues 299–303 (ARWAR) is RNA binding; important for wobble base 34 recognition. Zn(2+) is bound by residues Cys341, Cys343, Cys346, and His372.

The protein belongs to the queuine tRNA-ribosyltransferase family. In terms of assembly, homodimer. Within each dimer, one monomer is responsible for RNA recognition and catalysis, while the other monomer binds to the replacement base PreQ1. The cofactor is Zn(2+).

It carries out the reaction 7-aminomethyl-7-carbaguanine + guanosine(34) in tRNA = 7-aminomethyl-7-carbaguanosine(34) in tRNA + guanine. Functionally, catalyzes the base-exchange of a guanine (G) residue with the queuine precursor 7-aminomethyl-7-deazaguanine (PreQ1) at position 34 (anticodon wobble position) in tRNAs with GU(N) anticodons (tRNA-Asp, -Asn, -His and -Tyr). Catalysis occurs through a double-displacement mechanism. The nucleophile active site attacks the C1' of nucleotide 34 to detach the guanine base from the RNA, forming a covalent enzyme-RNA intermediate. The proton acceptor active site deprotonates the incoming PreQ1, allowing a nucleophilic attack on the C1' of the ribose to form the product. After dissociation, two additional enzymatic reactions on the tRNA convert PreQ1 to queuine (Q), resulting in the hypermodified nucleoside queuosine (7-(((4,5-cis-dihydroxy-2-cyclopenten-1-yl)amino)methyl)-7-deazaguanosine). The chain is Putative queuine tRNA-ribosyltransferase from Archaeoglobus fulgidus (strain ATCC 49558 / DSM 4304 / JCM 9628 / NBRC 100126 / VC-16).